Here is a 171-residue protein sequence, read N- to C-terminus: 6,7-dimethyl-8-ribityllumazine synthase (171 aa).

Residues Phe30, 64–66 (ALE), and 88–90 (AVI) contribute to the 5-amino-6-(D-ribitylamino)uracil site. Residue 93–94 (ET) participates in (2S)-2-hydroxy-3-oxobutyl phosphate binding. His96 serves as the catalytic Proton donor. Asn121 lines the 5-amino-6-(D-ribitylamino)uracil pocket. Arg135 is a binding site for (2S)-2-hydroxy-3-oxobutyl phosphate.

It belongs to the DMRL synthase family.

It catalyses the reaction (2S)-2-hydroxy-3-oxobutyl phosphate + 5-amino-6-(D-ribitylamino)uracil = 6,7-dimethyl-8-(1-D-ribityl)lumazine + phosphate + 2 H2O + H(+). Its pathway is cofactor biosynthesis; riboflavin biosynthesis; riboflavin from 2-hydroxy-3-oxobutyl phosphate and 5-amino-6-(D-ribitylamino)uracil: step 1/2. Catalyzes the formation of 6,7-dimethyl-8-ribityllumazine by condensation of 5-amino-6-(D-ribitylamino)uracil with 3,4-dihydroxy-2-butanone 4-phosphate. This is the penultimate step in the biosynthesis of riboflavin. This chain is 6,7-dimethyl-8-ribityllumazine synthase, found in Polynucleobacter necessarius subsp. necessarius (strain STIR1).